The sequence spans 109 residues: UPF0060 membrane protein YfjF (109 aa).

The next 4 membrane-spanning stretches (helical) occupy residues I6–W26, P32–F52, V61–D81, and L87–P107.

The protein belongs to the UPF0060 family.

Its subcellular location is the cell membrane. This Bacillus subtilis (strain 168) protein is UPF0060 membrane protein YfjF (yfjF).